Consider the following 833-residue polypeptide: 3-hydroxy-3-methylglutaryl-coenzyme A reductase (833 aa).

The next 4 membrane-spanning stretches (helical) occupy residues 10–32 (FCARHQWEVIVATLALLACAASV), 91–117 (YLLIIAGVFSTFASFIFTSAVASLFWS), 160–180 (LALLGPTATLDTLLAVLLVGV), and 301–321 (SADYIVIATLLCALIIKFVFF). The linker stretch occupies residues 322–419 (EEQRNWVIDM…EEVVMLVEQS (98 aa)). The disordered stretch occupies residues 347–374 (KPKFSVGDDSNSEVSTQTEGVLEDEWPT). A compositionally biased stretch (polar residues) spans 354–365 (DDSNSEVSTQTE). The catalytic stretch occupies residues 420-833 (HIPLHRLEAV…ENITLKVPTL (414 aa)). Residues E504 and K635 each act as charge relay system in the active site. N680 carries an N-linked (GlcNAc...) asparagine glycan. D711 functions as the Charge relay system in the catalytic mechanism. N715 and N720 each carry an N-linked (GlcNAc...) asparagine glycan. H809 acts as the Proton donor in catalysis. 2 N-linked (GlcNAc...) asparagine glycosylation sites follow: N813 and N825.

The protein belongs to the HMG-CoA reductase family.

Its subcellular location is the endoplasmic reticulum membrane. It carries out the reaction (R)-mevalonate + 2 NADP(+) + CoA = (3S)-3-hydroxy-3-methylglutaryl-CoA + 2 NADPH + 2 H(+). It participates in metabolic intermediate biosynthesis; (R)-mevalonate biosynthesis; (R)-mevalonate from acetyl-CoA: step 3/3. Its activity is regulated as follows. The activity of HMG-CoA-reductase is suppressed by exogenous mevalonate. Functionally, synthesis of mevalonate for the production of non-sterol isoprenoids, which are essential for growth differentiation. In Agrotis ipsilon (Black cutworm moth), this protein is 3-hydroxy-3-methylglutaryl-coenzyme A reductase (HMGR).